The primary structure comprises 269 residues: HTH-type transcriptional activator ArnR1 (269 aa).

The Cytoplasmic segment spans residues 1–217 (MSSMNKRVFD…LLKLTGSYRY (217 aa)). The H-T-H motif DNA-binding region spans 42–65 (TTEISQTINTSRKSIIDAIRKLVD). The chain crosses the membrane as a helical span at residues 218–238 (EIALTKVMLFNVISIPVLMYL). Residues 239-241 (KDQ) are Extracellular-facing. Residues 242–262 (LGILEAIWLYVIILLPLLSIF) form a helical membrane-spanning segment. Topologically, residues 263-269 (AEIFNRI) are cytoplasmic.

It localises to the cell membrane. Functionally, involved in regulation of archaellar gene expression. May activate flaB transcription upon nutrient starvation by acting on the flaB promoter. The protein is HTH-type transcriptional activator ArnR1 of Sulfolobus acidocaldarius (strain ATCC 33909 / DSM 639 / JCM 8929 / NBRC 15157 / NCIMB 11770).